A 386-amino-acid chain; its full sequence is D-amino-acid oxidase (386 aa).

FAD contacts are provided by G14, G15, V16, V17, E39, R40, A51, G52, and G53. The disordered stretch occupies residues 109–138 (SSSPPHPLLPPWVDPSASAAPPRELGTPDT). Pro residues predominate over residues 112-121 (PPHPLLPPWV). FAD contacts are provided by R174, V175, and A176. Residues Y253, Y261, and K332 each coordinate D-serine. Positions 261 and 332 each coordinate D-proline. Residues K332, G344, I345, G362, and A364 each coordinate FAD. K332 contributes to the D-dopa binding site. Position 362 (G362) interacts with D-serine. Residue G362 participates in D-proline binding. Residue G362 participates in D-dopa binding.

The protein belongs to the DAMOX/DASOX family.

It carries out the reaction a D-alpha-amino acid + O2 + H2O = a 2-oxocarboxylate + H2O2 + NH4(+). It catalyses the reaction D-alanine + O2 + H2O = pyruvate + H2O2 + NH4(+). The enzyme catalyses D-aspartate + O2 + H2O = oxaloacetate + H2O2 + NH4(+). Catalyzes the oxidative deamination of D-amino acids with broad substrate specificity. Enables the organism to utilize D-amino acids as a source of nutrients. The sequence is that of D-amino-acid oxidase from Zea mays (Maize).